We begin with the raw amino-acid sequence, 338 residues long: Lipoate-protein ligase A (338 aa).

Residues 29–216 (PATQRVLFLW…AFFAHYGERV (188 aa)) enclose the BPL/LPL catalytic domain. ATP is bound by residues Arg-71, 76–79 (GAVF), and Lys-134. Lys-134 lines the (R)-lipoate pocket.

It belongs to the LplA family. In terms of assembly, monomer.

The protein localises to the cytoplasm. The enzyme catalyses L-lysyl-[lipoyl-carrier protein] + (R)-lipoate + ATP = N(6)-[(R)-lipoyl]-L-lysyl-[lipoyl-carrier protein] + AMP + diphosphate + H(+). Its pathway is protein modification; protein lipoylation via exogenous pathway; protein N(6)-(lipoyl)lysine from lipoate: step 1/2. It functions in the pathway protein modification; protein lipoylation via exogenous pathway; protein N(6)-(lipoyl)lysine from lipoate: step 2/2. Its function is as follows. Catalyzes both the ATP-dependent activation of exogenously supplied lipoate to lipoyl-AMP and the transfer of the activated lipoyl onto the lipoyl domains of lipoate-dependent enzymes. This Escherichia coli O1:K1 / APEC protein is Lipoate-protein ligase A.